The chain runs to 356 residues: 5-formaminoimidazole-4-carboxamide-1-(beta)-D-ribofuranosyl 5'-monophosphate synthetase (356 aa).

5-amino-1-(5-phospho-beta-D-ribosyl)imidazole-4-carboxamide contacts are provided by His-27 and Ser-94. Residues 116–333 enclose the ATP-grasp domain; sequence RCLAWESDRE…YSDLIEKGLS (218 aa). ATP contacts are provided by residues 145–196 and Glu-226; that span reads AELI…TRYY. 5-amino-1-(5-phospho-beta-D-ribosyl)imidazole-4-carboxamide is bound at residue Asn-255. Mg(2+) contacts are provided by Glu-293 and Glu-306.

It belongs to the phosphohexose mutase family. It depends on Mg(2+) as a cofactor. Requires Mn(2+) as cofactor.

It carries out the reaction 5-amino-1-(5-phospho-beta-D-ribosyl)imidazole-4-carboxamide + formate + ATP = 5-formamido-1-(5-phospho-D-ribosyl)imidazole-4-carboxamide + ADP + phosphate. It functions in the pathway purine metabolism; IMP biosynthesis via de novo pathway; 5-formamido-1-(5-phospho-D-ribosyl)imidazole-4-carboxamide from 5-amino-1-(5-phospho-D-ribosyl)imidazole-4-carboxamide (formate route): step 1/1. In terms of biological role, catalyzes the ATP- and formate-dependent formylation of 5-aminoimidazole-4-carboxamide-1-beta-d-ribofuranosyl 5'-monophosphate (AICAR) to 5-formaminoimidazole-4-carboxamide-1-beta-d-ribofuranosyl 5'-monophosphate (FAICAR) in the absence of folates. This Methanothrix thermoacetophila (strain DSM 6194 / JCM 14653 / NBRC 101360 / PT) (Methanosaeta thermophila) protein is 5-formaminoimidazole-4-carboxamide-1-(beta)-D-ribofuranosyl 5'-monophosphate synthetase.